A 197-amino-acid chain; its full sequence is Phosphoheptose isomerase (197 aa).

Residues 36 to 197 (MVNALLNEGK…IDRQLFGSEE (162 aa)) form the SIS domain. 51 to 53 (NGG) lines the substrate pocket. Residues histidine 60 and glutamate 64 each contribute to the Zn(2+) site. Substrate contacts are provided by residues glutamate 64, 93–94 (ND), 119–121 (STS), serine 124, and glutamine 174. Glutamine 174 and histidine 182 together coordinate Zn(2+).

Belongs to the SIS family. GmhA subfamily. As to quaternary structure, homotetramer. Zn(2+) is required as a cofactor.

It is found in the cytoplasm. It carries out the reaction 2 D-sedoheptulose 7-phosphate = D-glycero-alpha-D-manno-heptose 7-phosphate + D-glycero-beta-D-manno-heptose 7-phosphate. It functions in the pathway carbohydrate biosynthesis; D-glycero-D-manno-heptose 7-phosphate biosynthesis; D-glycero-alpha-D-manno-heptose 7-phosphate and D-glycero-beta-D-manno-heptose 7-phosphate from sedoheptulose 7-phosphate: step 1/1. In terms of biological role, catalyzes the isomerization of sedoheptulose 7-phosphate in D-glycero-D-manno-heptose 7-phosphate. The polypeptide is Phosphoheptose isomerase (Pseudomonas aeruginosa (strain LESB58)).